The primary structure comprises 274 residues: NADPH-dependent 7-cyano-7-deazaguanine reductase (274 aa).

Position 81–83 (81–83 (IES)) interacts with substrate. 83-84 (SK) contacts NADPH. The active-site Thioimide intermediate is C182. D189 functions as the Proton donor in the catalytic mechanism. 221–222 (HE) serves as a coordination point for substrate. 250 to 251 (RG) lines the NADPH pocket.

This sequence belongs to the GTP cyclohydrolase I family. QueF type 2 subfamily. Homodimer.

The protein localises to the cytoplasm. The enzyme catalyses 7-aminomethyl-7-carbaguanine + 2 NADP(+) = 7-cyano-7-deazaguanine + 2 NADPH + 3 H(+). It participates in tRNA modification; tRNA-queuosine biosynthesis. Functionally, catalyzes the NADPH-dependent reduction of 7-cyano-7-deazaguanine (preQ0) to 7-aminomethyl-7-deazaguanine (preQ1). The chain is NADPH-dependent 7-cyano-7-deazaguanine reductase from Hahella chejuensis (strain KCTC 2396).